The primary structure comprises 200 residues: Holliday junction branch migration complex subunit RuvA (200 aa).

The segment at 1-63 is domain I; the sequence is MYAYIKGTLT…EDAQLLYGFI (63 aa). The domain II stretch occupies residues 64–142; it reads NQEEKDMFLS…INDVDSSQIL (79 aa). A flexible linker region spans residues 143 to 149; sequence NTDTQDH. Positions 150–200 are domain III; that stretch reads ANAPIIKEALLALEALGYSKRELTKVEKSLSKETFDSVDDAVKRGLQLLIA.

The protein belongs to the RuvA family. In terms of assembly, homotetramer. Forms an RuvA(8)-RuvB(12)-Holliday junction (HJ) complex. HJ DNA is sandwiched between 2 RuvA tetramers; dsDNA enters through RuvA and exits via RuvB. An RuvB hexamer assembles on each DNA strand where it exits the tetramer. Each RuvB hexamer is contacted by two RuvA subunits (via domain III) on 2 adjacent RuvB subunits; this complex drives branch migration. In the full resolvosome a probable DNA-RuvA(4)-RuvB(12)-RuvC(2) complex forms which resolves the HJ.

It localises to the cytoplasm. The RuvA-RuvB-RuvC complex processes Holliday junction (HJ) DNA during genetic recombination and DNA repair, while the RuvA-RuvB complex plays an important role in the rescue of blocked DNA replication forks via replication fork reversal (RFR). RuvA specifically binds to HJ cruciform DNA, conferring on it an open structure. The RuvB hexamer acts as an ATP-dependent pump, pulling dsDNA into and through the RuvAB complex. HJ branch migration allows RuvC to scan DNA until it finds its consensus sequence, where it cleaves and resolves the cruciform DNA. The protein is Holliday junction branch migration complex subunit RuvA of Staphylococcus saprophyticus subsp. saprophyticus (strain ATCC 15305 / DSM 20229 / NCIMB 8711 / NCTC 7292 / S-41).